Here is an 86-residue protein sequence, read N- to C-terminus: Acyl-CoA-binding protein homolog (86 aa).

The region spanning 2–86 is the ACB domain; the sequence is VSEQFNAAAE…FVEGLVAKYA (85 aa). Residues Lys14, 29 to 33, Lys51, Lys55, and Tyr74 each bind an acyl-CoA; that span reads YALFK.

The protein belongs to the ACBP family. As to expression, expressed in larval and pupal brains. In adults, expressed in cardia, part of the Malpighian tubules, fat body, and gametes of both sexes.

Binds medium- and long-chain acyl-CoA esters with very high affinity and may function as an intracellular carrier of acyl-CoA esters. May be involved in energy metabolism in a manner that depends on the substrate used for energy production. Dbi and its metabolites are involved in the regulation of multiple biological processes. The chain is Acyl-CoA-binding protein homolog from Drosophila melanogaster (Fruit fly).